Here is a 249-residue protein sequence, read N- to C-terminus: Probable transcriptional regulatory protein Meso_3192 (249 aa).

Belongs to the TACO1 family.

Its subcellular location is the cytoplasm. This is Probable transcriptional regulatory protein Meso_3192 from Chelativorans sp. (strain BNC1).